Consider the following 455-residue polypeptide: MNKITTRSPLEPEYQPLGKPHHALQACVDFEQALLHNNKGNCHPKEESLKPVRPHDLGKKEGQKGDGLRAHAPLAATSQPGRKEVGLKPQHNHQNNHDFNLSPLAEGATNRAHLYQQDSRFDDRVESIINALMPLAPFLEGVTCETGTSSESPCEPSGHDELFVQQSPIDSAQPVQLNTKPTVQPLNPAADGAEVIVWSVGRETPASIAKNQRDSRQKRLAEEPLALHQKALPEICPPAVSATPDDHLVARWCATPVTEVAEKSARFPYKATVQSEQLDMTELADRSQHLTDGVDSSKDTIEPPRPEELLLPREETLPEMYSLSFTAPVVTPGDHLLATMRATRLASVSEQLIQLAQRLAVELELRGGSSQVTQLHLNLPELGAIMVRIAEIPGKLHVELIASREALRILAQGSYDLLERLQRIEPTQLDFQASDDSEQESRQKRHVYEEWEAEE.

2 disordered regions span residues 38–82 and 430–455; these read NKGN…QPGR and DFQA…EAEE. Composition is skewed to basic and acidic residues over residues 43 to 69 and 439 to 449; these read HPKE…DGLR and QESRQKRHVYE.

Belongs to the SpaN family.

It localises to the cytoplasm. Component of the yop secretion machinery. The polypeptide is Yop proteins translocation protein P (yscP) (Yersinia pseudotuberculosis serotype I (strain IP32953)).